Consider the following 108-residue polypeptide: Dormancy-associated protein homolog 1 (108 aa).

Positions Asp28–Lys59 are disordered. Ser47 is subject to Phosphoserine. Thr50 is subject to Phosphothreonine.

It belongs to the DRM1/ARP family. In terms of tissue distribution, expressed mainly in the low bolt.

The polypeptide is Dormancy-associated protein homolog 1 (Arabidopsis thaliana (Mouse-ear cress)).